We begin with the raw amino-acid sequence, 308 residues long: Follistatin-related protein 1 (308 aa).

A signal peptide spans 1–20 (MWKRWLALALALVAVAWVRA). The region spanning 30–53 (ICANVFCGAGRECAVTEKGEPTCL) is the Follistatin-like domain. Cystine bridges form between cysteine 31/cysteine 42, cysteine 36/cysteine 52, cysteine 54/cysteine 84, cysteine 58/cysteine 77, and cysteine 66/cysteine 98. Residues 48–100 (GEPTCLCIEQCKPHKRPVCGSNGKTYLNHCELHRDACLTGSKIQVDYDGHCKE) enclose the Kazal-like domain. Asparagine 144 carries an N-linked (GlcNAc...) asparagine glycan. The EF-hand 1 domain maps to 144 to 178 (NYSEILDKYFKNFDNGDSRLDSSEFLKFVEQNETA). Phosphoserine is present on serine 165. Asparagine 175 and asparagine 180 each carry an N-linked (GlcNAc...) asparagine glycan. The region spanning 193-228 (LRGLCVDALIELSDENADWKLSFQEFLKCLNPSFNP) is the EF-hand 2 domain. The VWFC domain maps to 233 to 287 (CALEDETYADGAETEVDCNRCVCACGNWVCTAMTCDGKNQKGAQTQTEEEMTRYV).

As to quaternary structure, homodimer. Interacts with SCN10A. Interacts with DIP2A; DIP2A may act as a cell surface receptor for FSTL1. Interacts with BMP4. Interacts with CD14; this interaction promotes TL4-mediated signaling cascade.

It is found in the secreted. Functionally, secreted glycoprotein that is involved in various physiological processes, such as angiogenesis, regulation of the immune response, cell proliferation and differentiation. Plays a role in the development of the central nervous system, skeletal system, lungs, and ureter. Promotes endothelial cell survival, migration and differentiation into network structures in an AKT-dependent manner. Also promotes survival of cardiac myocytes. Initiates various signaling cascades by activating different receptors on the cell surface such as DIP2A, TLR4 or BMP receptors. The chain is Follistatin-related protein 1 (FSTL1) from Macaca fascicularis (Crab-eating macaque).